A 743-amino-acid polypeptide reads, in one-letter code: Beta-galactosidase (743 aa).

The active-site Proton donor is the Glu-388. Catalysis depends on Glu-453, which acts as the Nucleophile.

The protein belongs to the glycosyl hydrolase 2 family. In terms of assembly, homodimer.

It carries out the reaction Hydrolysis of terminal non-reducing beta-D-galactose residues in beta-D-galactosides.. Its function is as follows. Beta-galactosidase. This Thermoanaerobacter pseudethanolicus (strain ATCC 33223 / 39E) (Clostridium thermohydrosulfuricum) protein is Beta-galactosidase (lacZ).